A 122-amino-acid chain; its full sequence is Serum amyloid A-2 protein (122 aa).

A signal peptide spans 1 to 18 (MKPFLSIIFCFLVLGVDS). Gln-19 is modified (pyrrolidone carboxylic acid). A disordered region spans residues 100–122 (ANEWGRSGKDPNFFRPPGLPSKY).

This sequence belongs to the SAA family. As to quaternary structure, apolipoprotein of the HDL complex. As to expression, expressed by the liver; secreted in plasma.

The protein localises to the secreted. Its function is as follows. Major acute phase reactant. In Mesocricetus auratus (Golden hamster), this protein is Serum amyloid A-2 protein (SAA2).